The primary structure comprises 429 residues: Ribosomal RNA small subunit methyltransferase B (429 aa).

Residues 254–260, Asp277, Asp303, and Asp322 each bind S-adenosyl-L-methionine; that span reads CAAPGGK. Catalysis depends on Cys375, which acts as the Nucleophile. The tract at residues 397-419 is disordered; it reads ALSETGTPDQPGQQNLPGGEEGD. The span at 400–412 shows a compositional bias: polar residues; sequence ETGTPDQPGQQNL.

It belongs to the class I-like SAM-binding methyltransferase superfamily. RsmB/NOP family.

It is found in the cytoplasm. The enzyme catalyses cytidine(967) in 16S rRNA + S-adenosyl-L-methionine = 5-methylcytidine(967) in 16S rRNA + S-adenosyl-L-homocysteine + H(+). Its function is as follows. Specifically methylates the cytosine at position 967 (m5C967) of 16S rRNA. The chain is Ribosomal RNA small subunit methyltransferase B from Salmonella choleraesuis (strain SC-B67).